A 401-amino-acid polypeptide reads, in one-letter code: Anhydro-N-acetylmuramic acid kinase (401 aa).

ATP is bound at residue glycine 25–aspartate 32.

It belongs to the anhydro-N-acetylmuramic acid kinase family.

The enzyme catalyses 1,6-anhydro-N-acetyl-beta-muramate + ATP + H2O = N-acetyl-D-muramate 6-phosphate + ADP + H(+). The protein operates within amino-sugar metabolism; 1,6-anhydro-N-acetylmuramate degradation. It participates in cell wall biogenesis; peptidoglycan recycling. In terms of biological role, catalyzes the specific phosphorylation of 1,6-anhydro-N-acetylmuramic acid (anhMurNAc) with the simultaneous cleavage of the 1,6-anhydro ring, generating MurNAc-6-P. Is required for the utilization of anhMurNAc either imported from the medium or derived from its own cell wall murein, and thus plays a role in cell wall recycling. This Pseudoalteromonas atlantica (strain T6c / ATCC BAA-1087) protein is Anhydro-N-acetylmuramic acid kinase.